The sequence spans 630 residues: L-amino-acid oxidase (630 aa).

The N-terminal stretch at 1-21 is a signal peptide; that stretch reads MAGLALRLVLAATLLGLAGSL. A disulfide bridge links Cys35 with Cys198. A glycan (N-linked (GlcNAc...) asparagine) is linked at Asn53. Residues 68 to 69, 88 to 89, Arg96, and 112 to 115 contribute to the FAD site; these read VA, EA, and GAMR. Arg115 contributes to the substrate binding site. Residues Asn133 and Asn219 are each glycosylated (N-linked (GlcNAc...) asparagine). FAD is bound at residue Val286. A substrate-binding site is contributed by Tyr395. Residues Glu479 and 486 to 491 each bind FAD; that span reads GWVETA. 486–487 serves as a coordination point for substrate; that stretch reads GW. Residues 532–554 are disordered; sequence GERPEEQQAREEVSPDEQEPSHK.

This sequence belongs to the flavin monoamine oxidase family. FIG1 subfamily. It depends on FAD as a cofactor. As to expression, primarily found in immune tissues. Primarily found in immune tissues, mostly in B-lymphocytes. In terms of tissue distribution, restricted to the testis, predominantly in Sertoli cells at the periphery of the ducts, and the brain, including Purkinje cells, hippocampus and mitral cells in the olfactory bulb. No isoform 2 expression in fetal tissues.

Its subcellular location is the secreted. It is found in the cytoplasmic vesicle. The protein localises to the secretory vesicle. The protein resides in the acrosome. It localises to the lysosome. The catalysed reaction is an L-alpha-amino acid + O2 + H2O = a 2-oxocarboxylate + H2O2 + NH4(+). The enzyme catalyses L-tryptophan + O2 + H2O = indole-3-pyruvate + H2O2 + NH4(+). It carries out the reaction L-phenylalanine + O2 + H2O = 3-phenylpyruvate + H2O2 + NH4(+). It catalyses the reaction L-tyrosine + O2 + H2O = 3-(4-hydroxyphenyl)pyruvate + H2O2 + NH4(+). The catalysed reaction is L-arginine + O2 + H2O = 5-guanidino-2-oxopentanoate + H2O2 + NH4(+). It functions in the pathway amino-acid degradation; L-tryptophan degradation via pyruvate pathway. Secreted L-amino-acid oxidase that acts as a key immunoregulator. Has preference for L-aromatic amino acids: converts phenylalanine (Phe), tyrosine (Tyr) and tryptophan (Trp) to phenylpyruvic acid (PP), hydroxyphenylpyruvic acid (HPP), and indole-3-pyruvic acid (I3P), respectively. Also has weak L-arginine oxidase activity. Acts as a negative regulator of anti-tumor immunity by mediating Trp degradation via an indole pyruvate pathway that activates the transcription factor AHR. IL4I1-mediated Trp catabolism generates I3P, giving rise to indole metabolites (indole-3-acetic acid (IAA) and indole-3-aldehyde (I3A)) and kynurenic acid, which act as ligands for AHR, a ligand-activated transcription factor that plays important roles in immunity and cancer. AHR activation by indoles following IL4I1-mediated Trp degradation enhances tumor progression by promoting cancer cell motility and suppressing adaptive immunity. Also has an immunoregulatory function in some immune cell, probably by mediating Trp degradation and promoting downstream AHR activation: inhibits T-cell activation and proliferation, promotes the differentiation of naive CD4(+) T-cells into FOXP3(+) regulatory T-cells (Treg) and regulates the development and function of B-cells. Also regulates M2 macrophage polarization by inhibiting T-cell activation. Also has antibacterial properties by inhibiting growth of Gram negative and Gram positive bacteria through the production of NH4(+) and H2O2. This is L-amino-acid oxidase from Mus musculus (Mouse).